The chain runs to 279 residues: Lyso-glycine lipid O-acyltransferase (279 aa).

Belongs to the O-acyltransferase GlsA family.

It catalyses the reaction a lyso-glycine lipid + a fatty acyl-[ACP] = a glycine lipid + holo-[ACP]. The catalysed reaction is N-[(3R)-3-hydroxyhexadecanoyl]-glycine + hexadecanoyl-[ACP] = N-[(3R)-3-(hexadecanoyloxy)hexadecanoyl]-glycine + holo-[ACP]. It participates in lipid metabolism. Its function is as follows. Is involved in the production of glycine lipids (GL), which are phosphorus-free membrane lipids. Catalyzes the second step of GL biosynthesis, i.e. the O-acylation of the hydroxyl group of lyso-glycine lipids, resulting in the production of the mature diacylated glycine lipids. This chain is Lyso-glycine lipid O-acyltransferase, found in Phocaeicola vulgatus (strain ATCC 8482 / DSM 1447 / JCM 5826 / CCUG 4940 / NBRC 14291 / NCTC 11154) (Bacteroides vulgatus).